The primary structure comprises 778 residues: uncharacterized protein (778 aa).

Composition is skewed to polar residues over residues 1–11, 18–34, and 41–51; these read MPISSPGTRCS, TLQQ…QSLG, and GSITENYVQDS. The interval 1-60 is disordered; that stretch reads MPISSPGTRCSSDLKDPTLQQYSAESVSTEQSLGTFEESKGSITENYVQDSSVDEHDDGN. 2 consecutive transmembrane segments (helical) span residues 356–381 and 401–423; these read YILM…APII and GFLA…GAHI.

This sequence belongs to the TMCO4 family.

The protein localises to the golgi apparatus membrane. This is an uncharacterized protein from Schizosaccharomyces pombe (strain 972 / ATCC 24843) (Fission yeast).